The sequence spans 25 residues: GVVDILKGAAKDLAGHLATKVMDKL.

At Leu25 the chain carries Leucine amide.

This sequence belongs to the frog skin active peptide (FSAP) family. Ocellatin subfamily. Expressed by the skin glands.

It localises to the secreted. Functionally, shows a low activity in stimulating insulin release from rat BRIN-BD11 beta cells, and acts without loss of integrity of the plasma membrane. Does not show antibacterial (E.coli and S.aureus). Does not show hemolytic activity against human erythrocytes. The polypeptide is Ocellatin-L2 (Leptodactylus laticeps (Santa Fe frog)).